A 59-amino-acid chain; its full sequence is Small ribosomal subunit protein bS21A (59 aa).

The protein belongs to the bacterial ribosomal protein bS21 family.

The protein is Small ribosomal subunit protein bS21A of Gloeobacter violaceus (strain ATCC 29082 / PCC 7421).